A 226-amino-acid chain; its full sequence is UPF0758 protein LL1007 (226 aa).

The MPN domain maps to Gln-103–Arg-225. Zn(2+) is bound by residues His-174, His-176, and Asp-187. The JAMM motif signature appears at His-174–Asp-187.

Belongs to the UPF0758 family.

The chain is UPF0758 protein LL1007 from Lactococcus lactis subsp. lactis (strain IL1403) (Streptococcus lactis).